Reading from the N-terminus, the 233-residue chain is Large ribosomal subunit protein uL1 (233 aa).

Belongs to the universal ribosomal protein uL1 family. In terms of assembly, part of the 50S ribosomal subunit.

Functionally, binds directly to 23S rRNA. The L1 stalk is quite mobile in the ribosome, and is involved in E site tRNA release. Protein L1 is also a translational repressor protein, it controls the translation of the L11 operon by binding to its mRNA. The chain is Large ribosomal subunit protein uL1 from Rhizobium etli (strain ATCC 51251 / DSM 11541 / JCM 21823 / NBRC 15573 / CFN 42).